A 179-amino-acid chain; its full sequence is 3-hydroxyanthranilate 3,4-dioxygenase (179 aa).

Residue Arg47 coordinates O2. Fe cation contacts are provided by His51, Glu57, and His96. Glu57 lines the substrate pocket. The substrate site is built by Arg100 and Glu110. Residues Cys125, Cys128, Cys162, and Cys165 each coordinate Fe cation.

The protein belongs to the 3-HAO family. Requires Fe(2+) as cofactor.

The catalysed reaction is 3-hydroxyanthranilate + O2 = (2Z,4Z)-2-amino-3-carboxymuconate 6-semialdehyde. Its pathway is cofactor biosynthesis; NAD(+) biosynthesis; quinolinate from L-kynurenine: step 3/3. In terms of biological role, catalyzes the oxidative ring opening of 3-hydroxyanthranilate to 2-amino-3-carboxymuconate semialdehyde, which spontaneously cyclizes to quinolinate. The protein is 3-hydroxyanthranilate 3,4-dioxygenase of Bacillus cereus (strain ATCC 10987 / NRS 248).